Reading from the N-terminus, the 388-residue chain is Succinate--CoA ligase [ADP-forming] subunit beta (388 aa).

The region spanning 9 to 244 (KQLFARYGLP…QSQEDPREAQ (236 aa)) is the ATP-grasp domain. Residues Lys-46, 53–55 (GRG), Glu-99, Thr-102, and Glu-107 contribute to the ATP site. Residues Asn-199 and Asp-213 each contribute to the Mg(2+) site. Substrate-binding positions include Asn-264 and 321-323 (GIV).

It belongs to the succinate/malate CoA ligase beta subunit family. In terms of assembly, heterotetramer of two alpha and two beta subunits. Mg(2+) is required as a cofactor.

It catalyses the reaction succinate + ATP + CoA = succinyl-CoA + ADP + phosphate. The catalysed reaction is GTP + succinate + CoA = succinyl-CoA + GDP + phosphate. Its pathway is carbohydrate metabolism; tricarboxylic acid cycle; succinate from succinyl-CoA (ligase route): step 1/1. Its function is as follows. Succinyl-CoA synthetase functions in the citric acid cycle (TCA), coupling the hydrolysis of succinyl-CoA to the synthesis of either ATP or GTP and thus represents the only step of substrate-level phosphorylation in the TCA. The beta subunit provides nucleotide specificity of the enzyme and binds the substrate succinate, while the binding sites for coenzyme A and phosphate are found in the alpha subunit. This chain is Succinate--CoA ligase [ADP-forming] subunit beta, found in Shigella dysenteriae serotype 1 (strain Sd197).